The following is a 218-amino-acid chain: Large ribosomal subunit protein uL4 (218 aa).

Residues 46–102 form a disordered region; the sequence is ARQGTHSTKTRGEVRGGGRKPFRQKGTGRARQGSIRAPHFTGGGISHGPKPRDYSQR. Over residues 62–73 the composition is skewed to basic residues; the sequence is GGRKPFRQKGTG.

The protein belongs to the universal ribosomal protein uL4 family. In terms of assembly, part of the 50S ribosomal subunit.

One of the primary rRNA binding proteins, this protein initially binds near the 5'-end of the 23S rRNA. It is important during the early stages of 50S assembly. It makes multiple contacts with different domains of the 23S rRNA in the assembled 50S subunit and ribosome. Its function is as follows. Forms part of the polypeptide exit tunnel. This Corynebacterium glutamicum (strain R) protein is Large ribosomal subunit protein uL4.